We begin with the raw amino-acid sequence, 823 residues long: Lon protease (823 aa).

Residues 22–217 form the Lon N-terminal domain; the sequence is LPLLPVRDVV…KVNEHLNKEH (196 aa). Residue 369 to 376 coordinates ATP; it reads GPPGVGKT. The 182-residue stretch at 605–786 folds into the Lon proteolytic domain; it reads KNEVGIVTGL…DDVLAVALET (182 aa). Residues Ser692 and Lys735 contribute to the active site. The segment at 788–823 is disordered; sequence PPPPPASEGKPAATVKAPPRRGIAAPRKGAMAGAKS.

This sequence belongs to the peptidase S16 family. In terms of assembly, homohexamer. Organized in a ring with a central cavity.

It localises to the cytoplasm. The enzyme catalyses Hydrolysis of proteins in presence of ATP.. ATP-dependent serine protease that mediates the selective degradation of mutant and abnormal proteins as well as certain short-lived regulatory proteins. Required for cellular homeostasis and for survival from DNA damage and developmental changes induced by stress. Degrades polypeptides processively to yield small peptide fragments that are 5 to 10 amino acids long. Binds to DNA in a double-stranded, site-specific manner. In Geobacter metallireducens (strain ATCC 53774 / DSM 7210 / GS-15), this protein is Lon protease.